Here is a 194-residue protein sequence, read N- to C-terminus: Thymidylate kinase (194 aa).

Residue Gly-7–Ser-14 participates in ATP binding.

The protein belongs to the thymidylate kinase family.

The enzyme catalyses dTMP + ATP = dTDP + ADP. Phosphorylation of dTMP to form dTDP in both de novo and salvage pathways of dTTP synthesis. This chain is Thymidylate kinase, found in Campylobacter curvus (strain 525.92).